The primary structure comprises 417 residues: MDLVEAEAEEQPPDEDGDEEGYVEADPAGRFIRYDEIVGSGAVKTVYKAFDKLEGVEVAWSQSRIDDSVMGSSKKMKQLNTEIQLLKTLKHKNIEKMFASWVDGEKKTVNIITELFTSGSLTQYRRKHKKVNMKAMKRWAIQILTGLEYLHSQKPAIIHRDLKCDNIFINGNHGKVKIGDFGLATFMQQQKKSIKGTLEFMAPELLTGHYNELVDIYSFGMCMLEMVTCEYPYSECQGMAHIFKKIDEGKKPAAFYKIKDAEVRSFIENCLAPVENRMSATELLKSSFLQDDDLISVSLVKNMSEDGQQPVSCMLRKGEFLLTGNVDVASHVDLWLRFPDPSGCFKSVEFPFNLTEDTSLSVAVEMVEQFGLTQDSRPIIAQLIDAFLVILIPEWTPCVAIRQVVSEGANGLTIEKR.

A disordered region spans residues 1 to 23; it reads MDLVEAEAEEQPPDEDGDEEGYV. The Protein kinase domain occupies 32-289; that stretch reads IRYDEIVGSG…ATELLKSSFL (258 aa). Residues 113–116 and lysine 163 contribute to the ATP site; that span reads TELF. Aspartate 180 acts as the Proton acceptor in catalysis.

Belongs to the protein kinase superfamily. Ser/Thr protein kinase family. WNK subfamily.

The enzyme catalyses L-seryl-[protein] + ATP = O-phospho-L-seryl-[protein] + ADP + H(+). The catalysed reaction is L-threonyl-[protein] + ATP = O-phospho-L-threonyl-[protein] + ADP + H(+). This chain is Probable serine/threonine-protein kinase WNK9 (WNK9), found in Oryza sativa subsp. japonica (Rice).